The following is a 433-amino-acid chain: Tol-Pal system protein TolB (433 aa).

An N-terminal signal peptide occupies residues 1–21 (MRNLLRGMLVVICCMAGIAAA).

This sequence belongs to the TolB family. The Tol-Pal system is composed of five core proteins: the inner membrane proteins TolA, TolQ and TolR, the periplasmic protein TolB and the outer membrane protein Pal. They form a network linking the inner and outer membranes and the peptidoglycan layer.

Its subcellular location is the periplasm. Functionally, part of the Tol-Pal system, which plays a role in outer membrane invagination during cell division and is important for maintaining outer membrane integrity. The protein is Tol-Pal system protein TolB of Pseudomonas fluorescens (strain ATCC BAA-477 / NRRL B-23932 / Pf-5).